The chain runs to 318 residues: Aspartate carbamoyltransferase catalytic subunit (318 aa).

Residues arginine 67 and threonine 68 each coordinate carbamoyl phosphate. Lysine 95 is an L-aspartate binding site. Arginine 117, histidine 145, and glutamine 148 together coordinate carbamoyl phosphate. Residues arginine 178 and arginine 236 each contribute to the L-aspartate site. Residues glycine 277 and proline 278 each contribute to the carbamoyl phosphate site.

Belongs to the aspartate/ornithine carbamoyltransferase superfamily. ATCase family. As to quaternary structure, heterododecamer (2C3:3R2) of six catalytic PyrB chains organized as two trimers (C3), and six regulatory PyrI chains organized as three dimers (R2).

It catalyses the reaction carbamoyl phosphate + L-aspartate = N-carbamoyl-L-aspartate + phosphate + H(+). It functions in the pathway pyrimidine metabolism; UMP biosynthesis via de novo pathway; (S)-dihydroorotate from bicarbonate: step 2/3. Catalyzes the condensation of carbamoyl phosphate and aspartate to form carbamoyl aspartate and inorganic phosphate, the committed step in the de novo pyrimidine nucleotide biosynthesis pathway. In Roseiflexus sp. (strain RS-1), this protein is Aspartate carbamoyltransferase catalytic subunit.